The chain runs to 910 residues: DNA mismatch repair protein MutS (910 aa).

Positions 1–11 are enriched in basic and acidic residues; the sequence is MEAKVEEKEPE. Positions 1–21 are disordered; that stretch reads MEAKVEEKEPEPVENAGPDAP. 658 to 665 serves as a coordination point for ATP; that stretch reads GPNMGGKS.

Belongs to the DNA mismatch repair MutS family.

Functionally, this protein is involved in the repair of mismatches in DNA. It is possible that it carries out the mismatch recognition step. This protein has a weak ATPase activity. The sequence is that of DNA mismatch repair protein MutS from Brucella suis (strain ATCC 23445 / NCTC 10510).